Reading from the N-terminus, the 193-residue chain is Immunogenic protein MPB70 (193 aa).

Residues 1-30 (MKVKNTIAATSFAAAGLAALAVAVSPPAAA) form the signal peptide. In terms of domain architecture, FAS1 spans 57–189 (QDPVAVAASN…ATVYMIDSVL (133 aa)).

In terms of assembly, generally found as a monomer; homodimer in culture fluids.

It localises to the secreted. This chain is Immunogenic protein MPB70 (mpb70), found in Mycobacterium bovis (strain ATCC BAA-935 / AF2122/97).